The primary structure comprises 419 residues: L-rhamnose isomerase (419 aa).

H262, D294, and D296 together coordinate Mn(2+).

The protein belongs to the rhamnose isomerase family. As to quaternary structure, homotetramer. Requires Mn(2+) as cofactor.

It localises to the cytoplasm. It carries out the reaction L-rhamnopyranose = L-rhamnulose. It participates in carbohydrate degradation; L-rhamnose degradation; glycerone phosphate from L-rhamnose: step 1/3. Its function is as follows. Catalyzes the interconversion of L-rhamnose and L-rhamnulose. The chain is L-rhamnose isomerase from Shigella flexneri.